Reading from the N-terminus, the 101-residue chain is STAS-domain containing protein PA14_20770 (101 aa).

The region spanning 14–101 is the STAS domain; the sequence is LTIQIQGRFD…SNFEQLFKIS (88 aa).

Phosphorylated on a serine residue, possibly on Ser-56.

It localises to the secreted. This Pseudomonas aeruginosa (strain UCBPP-PA14) protein is STAS-domain containing protein PA14_20770.